The chain runs to 184 residues: Photosystem I assembly protein Ycf3 (184 aa).

TPR repeat units lie at residues 31-64 (AFAYYKAGMAAQAEGDYAEALENYYESLYLDEDQ), 68-101 (SYTLYNIGLIYAKNENYPRALEYYHQAVSLNSNL), and 131-164 (MEISEEYEYIELAKGLFDKAAEYWYQALKLAPDN).

This sequence belongs to the Ycf3 family.

Its subcellular location is the plastid. The protein localises to the chloroplast thylakoid membrane. Functionally, essential for the assembly of the photosystem I (PSI) complex. May act as a chaperone-like factor to guide the assembly of the PSI subunits. The polypeptide is Photosystem I assembly protein Ycf3 (Thalassiosira pseudonana (Marine diatom)).